Reading from the N-terminus, the 327-residue chain is Ornithine carbamoyltransferase 2, anabolic (327 aa).

Carbamoyl phosphate contacts are provided by residues Arg109 and 136–139 (HPTQ). Residues Asn168, Asp232, and 236–237 (SM) contribute to the L-ornithine site. Carbamoyl phosphate is bound by residues 273–274 (CL) and Arg313.

Belongs to the aspartate/ornithine carbamoyltransferase superfamily. OTCase family. Homotrimer.

It localises to the cytoplasm. It catalyses the reaction carbamoyl phosphate + L-ornithine = L-citrulline + phosphate + H(+). Its pathway is amino-acid biosynthesis; L-arginine biosynthesis; L-arginine from L-ornithine and carbamoyl phosphate: step 1/3. In terms of biological role, plays an important role in the survival and pathogenicity of P.syringae. Phaseolotoxin is a virulence factor that inhibits the catalysis of the host OTCase. Phaseolotoxin-producing bacteria do not suffer autointoxication because they possess the anabolic OTCase ArgK which can function even in the presence of phaseolotoxin. Reversibly catalyzes the transfer of the carbamoyl group from carbamoyl phosphate (CP) to the N(epsilon) atom of ornithine (ORN) to produce L-citrulline, which is a substrate for argininosuccinate synthetase, the enzyme involved in the final step in arginine biosynthesis. This Pseudomonas savastanoi pv. phaseolicola (Pseudomonas syringae pv. phaseolicola) protein is Ornithine carbamoyltransferase 2, anabolic.